A 418-amino-acid chain; its full sequence is Tyrosine--tRNA ligase (418 aa).

L-tyrosine is bound at residue Tyr-34. Positions 39 to 48 (PTADSLHLGH) match the 'HIGH' region motif. Residues Tyr-169 and Gln-173 each contribute to the L-tyrosine site. Positions 229–233 (KFGKS) match the 'KMSKS' region motif. Lys-232 is a binding site for ATP. Positions 352 to 418 (LNIVEILVSS…GKKKYAVLTY (67 aa)) constitute an S4 RNA-binding domain.

The protein belongs to the class-I aminoacyl-tRNA synthetase family. TyrS type 1 subfamily. In terms of assembly, homodimer.

Its subcellular location is the cytoplasm. The enzyme catalyses tRNA(Tyr) + L-tyrosine + ATP = L-tyrosyl-tRNA(Tyr) + AMP + diphosphate + H(+). In terms of biological role, catalyzes the attachment of tyrosine to tRNA(Tyr) in a two-step reaction: tyrosine is first activated by ATP to form Tyr-AMP and then transferred to the acceptor end of tRNA(Tyr). The sequence is that of Tyrosine--tRNA ligase from Streptococcus uberis (strain ATCC BAA-854 / 0140J).